The primary structure comprises 243 residues: UPF0502 protein H16_B1091 (243 aa).

The disordered stretch occupies residues 1 to 23 (MQSNHDSDASQAGDRPARPALRP).

It belongs to the UPF0502 family.

The protein is UPF0502 protein H16_B1091 of Cupriavidus necator (strain ATCC 17699 / DSM 428 / KCTC 22496 / NCIMB 10442 / H16 / Stanier 337) (Ralstonia eutropha).